Here is a 715-residue protein sequence, read N- to C-terminus: Nucleolar complex protein 2 homolog (715 aa).

Disordered regions lie at residues 17–71, 85–132, and 638–715; these read SKRI…HKLD, FLQQ…DKTK, and ERSA…SDED. The segment covering 89–128 has biased composition (acidic residues); the sequence is EDADLLNMEDDGDDDEDDDEDDEDEEEEESDDDEDDEEDD. Residues 638 to 660 show a composition bias toward basic and acidic residues; the sequence is ERSAVENSKKDDKKKKKEEEAAA.

This sequence belongs to the NOC2 family.

It is found in the nucleus. Required for normal somatic gonad development and for regulation of germline development and proliferation. This chain is Nucleolar complex protein 2 homolog (pro-2), found in Caenorhabditis elegans.